The primary structure comprises 1026 residues: uncharacterized protein (1026 aa).

WD repeat units follow at residues 14–53, 62–104, 148–187, and 937–977; these read LLDEGLDVSSIHCFDQYLIVGQCSGQVMVFDVSTDNHFTL, HSVS…RRAT, GHEDWPILFPFKDEALLIPVAYSDGSVSLWSVDWSALTFK, and NAEC…VKFL.

It localises to the cytoplasm. It is found in the nucleus. This is an uncharacterized protein from Schizosaccharomyces pombe (strain 972 / ATCC 24843) (Fission yeast).